Reading from the N-terminus, the 488-residue chain is Glutamyl-tRNA(Gln) amidotransferase subunit A (488 aa).

Catalysis depends on charge relay system residues Lys-77 and Ser-152. Ser-176 functions as the Acyl-ester intermediate in the catalytic mechanism.

The protein belongs to the amidase family. GatA subfamily. In terms of assembly, heterotrimer of A, B and C subunits.

It catalyses the reaction L-glutamyl-tRNA(Gln) + L-glutamine + ATP + H2O = L-glutaminyl-tRNA(Gln) + L-glutamate + ADP + phosphate + H(+). Allows the formation of correctly charged Gln-tRNA(Gln) through the transamidation of misacylated Glu-tRNA(Gln) in organisms which lack glutaminyl-tRNA synthetase. The reaction takes place in the presence of glutamine and ATP through an activated gamma-phospho-Glu-tRNA(Gln). This chain is Glutamyl-tRNA(Gln) amidotransferase subunit A, found in Streptococcus pyogenes serotype M28 (strain MGAS6180).